Here is a 458-residue protein sequence, read N- to C-terminus: MAAEDPATRRVQVAEHPRLLKLKEMFNSKFGSTPKFYVRAPGRVNIIGEHIDYCGYSVIPMAVEQDMLIAVEPVKTHTLQLANTDPLYPDFSTTANNICIDKTKPLWHNYFLCGFKGIQEHFGLSKLPGMNCLVDGNIPPSSGLSSSSALVCCAGLVTLTVLGLRLSKVELAEICAKSERYIGTEGGGMDQSISFLAEEGTAKLIEFSPLRATNVKLPSGAVFVIANSCMEMNKAATSHFNVRVMECRLAAKVLAKHKGLQWDNVLRLEEVQSKLGISLEEMLLVTEDALHPEPYSREEICRCLGISLERLRTQILTPNTQDELTFKLYQRAKHVYSEAARVLQFKQVCEDAPDNAVQLLGELMNQSHRSCRDMYECSCPELDQLVDICRKFGAKGSRLTGAGWGGCTVSLVPADMLSSFLASVHEAYYQGNTSRLAQEKHSLFATKPGGGALVFREV.

4 residues coordinate alpha-D-galactose: R43, E49, H50, and D52. The ATP site is built by G143, S145, and S146. Position 190 (D190) interacts with alpha-D-galactose. D190 acts as the Proton acceptor in catalysis. ATP is bound by residues N233 and K234.

This sequence belongs to the GHMP kinase family. GalK subfamily. Monomer.

It carries out the reaction N-acetyl-alpha-D-galactosamine + ATP = N-acetyl-alpha-D-galactosamine 1-phosphate + ADP + H(+). Functionally, acts on GalNAc. Also acts as a galactokinase when galactose is present at high concentrations. The protein is N-acetylgalactosamine kinase (Galk2) of Mus musculus (Mouse).